Reading from the N-terminus, the 279-residue chain is Large ribosomal subunit protein uL2 (279 aa).

The tract at residues 223–279 (TVRGSAMNPNDHPHGGGEGRSPVGMDAPRTPWGKRHMGVKTRNNKKSSTSMIVRRRK) is disordered. Residues 254–267 (WGKRHMGVKTRNNK) show a composition bias toward basic residues.

This sequence belongs to the universal ribosomal protein uL2 family. Part of the 50S ribosomal subunit. Forms a bridge to the 30S subunit in the 70S ribosome.

In terms of biological role, one of the primary rRNA binding proteins. Required for association of the 30S and 50S subunits to form the 70S ribosome, for tRNA binding and peptide bond formation. It has been suggested to have peptidyltransferase activity; this is somewhat controversial. Makes several contacts with the 16S rRNA in the 70S ribosome. The polypeptide is Large ribosomal subunit protein uL2 (Ureaplasma parvum serovar 3 (strain ATCC 27815 / 27 / NCTC 11736)).